Consider the following 111-residue polypeptide: Ig kappa chain V-III region PC 3741/TEPC 111 (111 aa).

The tract at residues 1–23 is framework-1; sequence DIVLTQSPASLAVSLGQRATISC. Cysteine 23 and cysteine 92 form a disulfide bridge. Residues 24–38 are complementarity-determining-1; that stretch reads RASESVDSYGNSFMH. The framework-2 stretch occupies residues 39-53; sequence WYQQKPGQPPKLLIY. The complementarity-determining-2 stretch occupies residues 54–60; sequence RASNLES. The interval 61-92 is framework-3; that stretch reads GIPARFSGSGSRTDFTLTINPVEADDVATYYC. Residues 93-101 are complementarity-determining-3; it reads QQSNEDPYT. The framework-4 stretch occupies residues 102–111; that stretch reads FGGGTKLEIK.

The protein is Ig kappa chain V-III region PC 3741/TEPC 111 of Mus musculus (Mouse).